A 224-amino-acid polypeptide reads, in one-letter code: uncharacterized protein (224 aa).

This is an uncharacterized protein from Mycobacterium tuberculosis (strain ATCC 25618 / H37Rv).